Here is a 208-residue protein sequence, read N- to C-terminus: Ribosomal RNA large subunit methyltransferase E (208 aa).

S-adenosyl-L-methionine-binding residues include Gly63, Trp65, Asp83, Asp99, and Asp124. Lys164 functions as the Proton acceptor in the catalytic mechanism.

The protein belongs to the class I-like SAM-binding methyltransferase superfamily. RNA methyltransferase RlmE family.

The protein resides in the cytoplasm. The enzyme catalyses uridine(2552) in 23S rRNA + S-adenosyl-L-methionine = 2'-O-methyluridine(2552) in 23S rRNA + S-adenosyl-L-homocysteine + H(+). Its function is as follows. Specifically methylates the uridine in position 2552 of 23S rRNA at the 2'-O position of the ribose in the fully assembled 50S ribosomal subunit. This chain is Ribosomal RNA large subunit methyltransferase E, found in Salmonella choleraesuis (strain SC-B67).